The following is a 184-amino-acid chain: ATP synthase subunit b, chloroplastic (184 aa).

The helical transmembrane segment at 27-49 (LATNLINLSVVLGVLIFFGKGVL) threads the bilayer.

It belongs to the ATPase B chain family. In terms of assembly, F-type ATPases have 2 components, F(1) - the catalytic core - and F(0) - the membrane proton channel. F(1) has five subunits: alpha(3), beta(3), gamma(1), delta(1), epsilon(1). F(0) has four main subunits: a(1), b(1), b'(1) and c(10-14). The alpha and beta chains form an alternating ring which encloses part of the gamma chain. F(1) is attached to F(0) by a central stalk formed by the gamma and epsilon chains, while a peripheral stalk is formed by the delta, b and b' chains.

It is found in the plastid. Its subcellular location is the chloroplast thylakoid membrane. Functionally, f(1)F(0) ATP synthase produces ATP from ADP in the presence of a proton or sodium gradient. F-type ATPases consist of two structural domains, F(1) containing the extramembraneous catalytic core and F(0) containing the membrane proton channel, linked together by a central stalk and a peripheral stalk. During catalysis, ATP synthesis in the catalytic domain of F(1) is coupled via a rotary mechanism of the central stalk subunits to proton translocation. Component of the F(0) channel, it forms part of the peripheral stalk, linking F(1) to F(0). This Nicotiana tabacum (Common tobacco) protein is ATP synthase subunit b, chloroplastic.